The sequence spans 362 residues: Anthranilate phosphoribosyltransferase (362 aa).

Residues Gly96, 99 to 100 (GD), Thr104, 106 to 109 (NIST), 124 to 132 (KHGNRAASS), and Gly136 contribute to the 5-phospho-alpha-D-ribose 1-diphosphate site. Gly96 contributes to the anthranilate binding site. Ser108 serves as a coordination point for Mg(2+). Residue Asn127 coordinates anthranilate. Arg182 is a binding site for anthranilate. Mg(2+)-binding residues include Asp240 and Glu241.

Belongs to the anthranilate phosphoribosyltransferase family. In terms of assembly, homodimer. It depends on Mg(2+) as a cofactor.

The catalysed reaction is N-(5-phospho-beta-D-ribosyl)anthranilate + diphosphate = 5-phospho-alpha-D-ribose 1-diphosphate + anthranilate. The protein operates within amino-acid biosynthesis; L-tryptophan biosynthesis; L-tryptophan from chorismate: step 2/5. Catalyzes the transfer of the phosphoribosyl group of 5-phosphorylribose-1-pyrophosphate (PRPP) to anthranilate to yield N-(5'-phosphoribosyl)-anthranilate (PRA). This is Anthranilate phosphoribosyltransferase from Rhodococcus jostii (strain RHA1).